An 82-amino-acid polypeptide reads, in one-letter code: Endocuticle structural protein SgAbd-6 (82 aa).

Glutamine 1 carries the post-translational modification Pyrrolidone carboxylic acid. Positions 18-82 constitute a Chitin-binding type R&amp;R domain; it reads LGQYTFGFKT…ENGFQPQYTQ (65 aa).

Component of the abdominal endocuticle. The protein is Endocuticle structural protein SgAbd-6 of Schistocerca gregaria (Desert locust).